Consider the following 311-residue polypeptide: HTH-type transcriptional regulator PcaQ (311 aa).

Positions 6–63 (IKFRHLQTFVEVARQKSVIRAAEILHVSQPAVTKTIRELEDVLGVSLLEREGRGIRIS) constitute an HTH lysR-type domain. Positions 23–42 (VIRAAEILHVSQPAVTKTIR) form a DNA-binding region, H-T-H motif.

This sequence belongs to the LysR transcriptional regulatory family.

In terms of biological role, activates transcription of the pcaDCHGB operon for the catabolism of the phenolic compound protocatechuate. This chain is HTH-type transcriptional regulator PcaQ (pcaQ), found in Agrobacterium fabrum (strain C58 / ATCC 33970) (Agrobacterium tumefaciens (strain C58)).